The following is an 83-amino-acid chain: Major outer membrane lipoprotein (83 aa).

Positions 1–19 are cleaved as a signal peptide; that stretch reads MNNVLKFSALALAAVLATG. Residue cysteine 20 is the site of N-palmitoyl cysteine attachment. A lipid anchor (S-diacylglycerol cysteine) is attached at cysteine 20.

The protein localises to the cell outer membrane. In Pseudomonas aeruginosa (strain ATCC 15692 / DSM 22644 / CIP 104116 / JCM 14847 / LMG 12228 / 1C / PRS 101 / PAO1), this protein is Major outer membrane lipoprotein (oprI).